We begin with the raw amino-acid sequence, 498 residues long: Cytochrome P450 monooxygenase apdB (498 aa).

A helical transmembrane segment spans residues 20–40 (ASPQVFKLFVLILFVLLVLKI). Cysteine 457 is a binding site for heme.

This sequence belongs to the cytochrome P450 family. Heme serves as cofactor.

It is found in the membrane. The protein operates within secondary metabolite biosynthesis. Functionally, cytochrome P450 monooxygenase; part of the gene cluster that mediates the biosynthesis of aspyridones. The polyketide-amino acid backbone preaspyridone A is first assembled by the PKS-NRPS hybrid apdA. The assembly of preaspyridone A is initiated by loading of malonyl-CoA onto apdA, followed by decarboxylation to yield the acetyl starter unit. The growing polyketide chain then elongates into a tetraketide. The adpA PKS module catalyzes three Claisen condensations, as well as beta-keto processing and methylation. Alpha-methylation step during polyketide synthesis is a prerequisite and a key checkpoint for chain transfer between PKS and NRPS modules. The downstream NRPS module contains the condensation (C), adenylation (A), and thiolation (T) domains and catalyzes the incorporation of tyrosine via the formation of the L-tyrosinyl-thioester and the amide linkage between L-tyrosinyl-thioester and the tetraketide. The bimodular assembly line is terminated with a reductase (R) domain that facilitates formation and release of the tetramic acid product. Because apdA lacks a designated enoylreductase (ER) domain, the required activity is provided the enoyl reductase apdC. ApdC appears to operate with different stereoselectivity in different PKS cycle. Combined with apdC, apdA is proposed to synthesize preaspyridone A via about 20 enzymatic steps. A number of oxidative steps performed successively by the cytochrome P450 monooxygenases apdE and apdB are required for the conversion of preaspyridone A to aspyridone A. The cytochrome P450 monooxygenase apdE is responsible for the oxidative dephenylation of preaspyridone A. Finally, the predicted FAD-dependent monooxygenase apdD and the acyl-CoA dehydrogenase apdG may be involved in the transformation of aspyridone A into aspyridone B. The protein is Cytochrome P450 monooxygenase apdB of Emericella nidulans (strain FGSC A4 / ATCC 38163 / CBS 112.46 / NRRL 194 / M139) (Aspergillus nidulans).